The following is a 281-amino-acid chain: uncharacterized protein (281 aa).

The protein localises to the plastid. Its subcellular location is the chloroplast. This is an uncharacterized protein from Euglena gracilis.